The primary structure comprises 190 residues: UPF0398 protein LAR_0869 (190 aa).

Belongs to the UPF0398 family.

The polypeptide is UPF0398 protein LAR_0869 (Limosilactobacillus reuteri subsp. reuteri (strain JCM 1112) (Lactobacillus reuteri)).